A 480-amino-acid chain; its full sequence is Aromatic-L-amino-acid decarboxylase (480 aa).

Met-1 is modified (N-acetylmethionine). Tandem repeats lie at residues 58–115 (KDIE…TELE) and 118–178 (MMDW…TQAA). The segment at 58 to 178 (KDIEKIIMPG…AASPEFTQAA (121 aa)) is 2 X approximate tandem repeats. Thr-82 serves as a coordination point for substrate. Positions 148 and 149 each coordinate pyridoxal 5'-phosphate. A substrate-binding site is contributed by His-192. The pyridoxal 5'-phosphate site is built by Thr-246 and Asn-300. Lys-303 is subject to N6-(pyridoxal phosphate)lysine.

This sequence belongs to the group II decarboxylase family. In terms of assembly, homodimer. Pyridoxal 5'-phosphate is required as a cofactor.

The catalysed reaction is L-dopa + H(+) = dopamine + CO2. The enzyme catalyses 5-hydroxy-L-tryptophan + H(+) = serotonin + CO2. It participates in catecholamine biosynthesis; dopamine biosynthesis; dopamine from L-tyrosine: step 2/2. In terms of biological role, catalyzes the decarboxylation of L-3,4-dihydroxyphenylalanine (DOPA) to dopamine and L-5-hydroxytryptophan to serotonin. This Mus musculus (Mouse) protein is Aromatic-L-amino-acid decarboxylase (Ddc).